A 251-amino-acid polypeptide reads, in one-letter code: Adenosine 5'-phosphosulfate reductase (251 aa).

Residues C121, C122, C204, and C207 each coordinate [4Fe-4S] cluster. The active-site Nucleophile; cysteine thiosulfonate intermediate is C232.

The protein belongs to the PAPS reductase family. CysH subfamily. Requires [4Fe-4S] cluster as cofactor.

It localises to the cytoplasm. It catalyses the reaction [thioredoxin]-disulfide + sulfite + AMP + 2 H(+) = adenosine 5'-phosphosulfate + [thioredoxin]-dithiol. The protein operates within sulfur metabolism; hydrogen sulfide biosynthesis; sulfite from sulfate. Catalyzes the formation of sulfite from adenosine 5'-phosphosulfate (APS) using thioredoxin as an electron donor. The protein is Adenosine 5'-phosphosulfate reductase of Sinorhizobium fredii (strain USDA 257).